Here is a 184-residue protein sequence, read N- to C-terminus: uncharacterized protein (184 aa).

In terms of domain architecture, Nudix hydrolase spans 36-164 (LRHRATYIVV…TPDSLKALAL (129 aa)). The short motif at 73–95 (GGVVQADEQLLESARREAEEELG) is the Nudix box element. Residues Glu89 and Glu93 each coordinate Mg(2+).

This sequence belongs to the Nudix hydrolase family. Mg(2+) is required as a cofactor.

This is an uncharacterized protein from Salmonella typhi.